Consider the following 105-residue polypeptide: Putative zinc finger protein 861 (105 aa).

Residues 75–97 (YTCKPCGNAFRFHHSFHIHERPH) form a C2H2-type zinc finger.

This chain is Putative zinc finger protein 861 (ZNF861P), found in Homo sapiens (Human).